The sequence spans 396 residues: Elongation factor Tu (396 aa).

The tr-type G domain maps to 10–206 (KPHVNVGTIG…ALDNYIPLPE (197 aa)). The interval 19 to 26 (GHVDHGKT) is G1. Residue 19 to 26 (GHVDHGKT) participates in GTP binding. T26 provides a ligand contact to Mg(2+). Residues 60–64 (GITIN) are G2. Positions 81 to 84 (DCPG) are G3. GTP is bound by residues 81–85 (DCPGH) and 136–139 (NKCD). A G4 region spans residues 136–139 (NKCD). The tract at residues 174-176 (SAK) is G5.

The protein belongs to the TRAFAC class translation factor GTPase superfamily. Classic translation factor GTPase family. EF-Tu/EF-1A subfamily. In terms of assembly, monomer.

The protein localises to the cytoplasm. It catalyses the reaction GTP + H2O = GDP + phosphate + H(+). GTP hydrolase that promotes the GTP-dependent binding of aminoacyl-tRNA to the A-site of ribosomes during protein biosynthesis. In Polaromonas naphthalenivorans (strain CJ2), this protein is Elongation factor Tu.